The primary structure comprises 591 residues: Probable translation initiation factor IF-2 (591 aa).

Residues 6–220 (IRTPIVCVMG…IMIGLAQRYM (215 aa)) form the tr-type G domain. The segment at 15-22 (GHVDHGKT) is G1. 15–22 (GHVDHGKT) contacts GTP. The G2 stretch occupies residues 40-44 (AITQH). The segment at 76–79 (DTPG) is G3. GTP is bound by residues 76–80 (DTPGH) and 130–133 (TKVD). Positions 130–133 (TKVD) are G4. The tract at residues 198–200 (SAH) is G5.

It belongs to the TRAFAC class translation factor GTPase superfamily. Classic translation factor GTPase family. IF-2 subfamily.

Functionally, function in general translation initiation by promoting the binding of the formylmethionine-tRNA to ribosomes. Seems to function along with eIF-2. The chain is Probable translation initiation factor IF-2 from Methanoregula boonei (strain DSM 21154 / JCM 14090 / 6A8).